Here is a 257-residue protein sequence, read N- to C-terminus: 1-(5-phosphoribosyl)-5-[(5-phosphoribosylamino)methylideneamino] imidazole-4-carboxamide isomerase (257 aa).

Residue D8 is the Proton acceptor of the active site. D129 functions as the Proton donor in the catalytic mechanism.

It belongs to the HisA/HisF family.

The protein localises to the cytoplasm. The enzyme catalyses 1-(5-phospho-beta-D-ribosyl)-5-[(5-phospho-beta-D-ribosylamino)methylideneamino]imidazole-4-carboxamide = 5-[(5-phospho-1-deoxy-D-ribulos-1-ylimino)methylamino]-1-(5-phospho-beta-D-ribosyl)imidazole-4-carboxamide. It participates in amino-acid biosynthesis; L-histidine biosynthesis; L-histidine from 5-phospho-alpha-D-ribose 1-diphosphate: step 4/9. This chain is 1-(5-phosphoribosyl)-5-[(5-phosphoribosylamino)methylideneamino] imidazole-4-carboxamide isomerase, found in Acaryochloris marina (strain MBIC 11017).